The primary structure comprises 137 residues: Small ribosomal subunit protein uS12 (137 aa).

Residues 33-57 form a disordered region; it reads KVQTNVSSPQKRGVATRVGTMTPKK. Residue Asp-102 is modified to 3-methylthioaspartic acid.

This sequence belongs to the universal ribosomal protein uS12 family. In terms of assembly, part of the 30S ribosomal subunit. Contacts proteins S8 and S17. May interact with IF1 in the 30S initiation complex.

In terms of biological role, with S4 and S5 plays an important role in translational accuracy. Its function is as follows. Interacts with and stabilizes bases of the 16S rRNA that are involved in tRNA selection in the A site and with the mRNA backbone. Located at the interface of the 30S and 50S subunits, it traverses the body of the 30S subunit contacting proteins on the other side and probably holding the rRNA structure together. The combined cluster of proteins S8, S12 and S17 appears to hold together the shoulder and platform of the 30S subunit. The protein is Small ribosomal subunit protein uS12 of Streptococcus thermophilus (strain CNRZ 1066).